A 1143-amino-acid chain; its full sequence is Condensin-2 complex subunit G2 (1143 aa).

At Ser-30 the chain carries Phosphoserine. An HEAT repeat occupies 460–498 (LLPALRYSLHDNSEKVRVAFVDMLLKIKAVRAAKFWKIC). A phosphothreonine mark is found at Thr-805 and Thr-1119.

As to quaternary structure, component of the condensin-2 complex, which contains the SMC2 and SMC4 heterodimer, and 3 non SMC subunits that probably regulate the complex: NCAPH2, NCAPD3 and NCAPG2.

It localises to the nucleus. Regulatory subunit of the condensin-2 complex, a complex which establishes mitotic chromosome architecture and is involved in physical rigidity of the chromatid axis. This chain is Condensin-2 complex subunit G2 (NCAPG2), found in Homo sapiens (Human).